The chain runs to 193 residues: Recombination protein RecR (193 aa).

The segment at 61-76 (CTSCNALSESEVCEIC) adopts a C4-type zinc-finger fold. One can recognise a Toprim domain in the interval 84-170 (SQLCMVLHPR…TFTKIAQGVP (87 aa)).

This sequence belongs to the RecR family.

Functionally, may play a role in DNA repair. It seems to be involved in an RecBC-independent recombinational process of DNA repair. It may act with RecF and RecO. The sequence is that of Recombination protein RecR from Helicobacter pylori (strain HPAG1).